The sequence spans 197 residues: Fe/S biogenesis protein NfuA (197 aa).

Positions 155 and 158 each coordinate [4Fe-4S] cluster.

It belongs to the NfuA family. In terms of assembly, homodimer. The cofactor is [4Fe-4S] cluster.

Involved in iron-sulfur cluster biogenesis. Binds a 4Fe-4S cluster, can transfer this cluster to apoproteins, and thereby intervenes in the maturation of Fe/S proteins. Could also act as a scaffold/chaperone for damaged Fe/S proteins. In Pseudomonas syringae pv. syringae (strain B728a), this protein is Fe/S biogenesis protein NfuA.